The chain runs to 476 residues: RuvB-like 1 (476 aa).

Positions 1-23 (MDMEVDEAISGTSSSRLAPIEEV) are disordered. An ATP-binding site is contributed by 89 to 96 (GPPATGKT).

It belongs to the RuvB family. Forms homohexameric rings. May form a dodecamer with ruvb-2 made of two stacked hexameric rings. As to expression, expressed in gonadal cells.

Its subcellular location is the cytoplasm. The protein resides in the nucleus. It catalyses the reaction ATP + H2O = ADP + phosphate + H(+). Functionally, possesses single-stranded DNA-stimulated ATPase and ATP dependent DNA helicase (3' to 5') activity suggesting a role in nuclear processes such as recombination and transcription. May participate in several chromatin remodeling complexes that mediate the ATP-dependent exchange of histones and remodel chromatin by shifting nucleosomes. Involvement in these complexes is likely required for transcriptional activation of selected genes and DNA repair in response to DNA damage. Involved in the Ce-Tor signaling pathway whereby it is required for the accumulation and localization of box C/D snoRNP to nucleoli to regulate ribosomal maturation and thus protein synthesis. Antagonizes the transcriptional activity of transcription factor pha-4, to control postembryonic development and adult longevity. Has a role in pharyngeal development. Has a role in gonadal development. The protein is RuvB-like 1 of Caenorhabditis elegans.